A 226-amino-acid chain; its full sequence is Thymidylate kinase (226 aa).

20 to 27 is a binding site for ATP; that stretch reads GGEGAGKS.

It belongs to the thymidylate kinase family.

It catalyses the reaction dTMP + ATP = dTDP + ADP. In terms of biological role, phosphorylation of dTMP to form dTDP in both de novo and salvage pathways of dTTP synthesis. The polypeptide is Thymidylate kinase (Bradyrhizobium sp. (strain ORS 278)).